The sequence spans 231 residues: MSEIKDVIVQGLWKNNSALVQLLGLCPLLAVTSTATNALGLGLATTLVLTLTNLTISTLRHWTPAEIRIPIYVMIIASVVSAVQMLINAYAFGLYQSLGIFIPLIVTNCIVVGRAEAFAAKKGPALSALDGFSIGMGATCAMFVLGSLREIIGNGTLFDGADALLGSWAKVLRVEIFHTDSPFLLAMLPPGAFIGLGLMLAGKYLIDERMKKRRAEATAERALPNGETGNV.

The next 6 helical transmembrane spans lie at 18 to 38, 39 to 59, 63 to 83, 86 to 106, 125 to 145, and 182 to 202; these read ALVQ…ATNA, LGLG…ISTL, TPAE…VSAV, LINA…PLIV, ALSA…MFVL, and PFLL…MLAG.

The protein belongs to the NqrDE/RnfAE family. The complex is composed of six subunits: RsxA, RsxB, RsxC, RsxD, RsxE and RsxG.

It localises to the cell inner membrane. Functionally, part of a membrane-bound complex that couples electron transfer with translocation of ions across the membrane. Required to maintain the reduced state of SoxR. The chain is Ion-translocating oxidoreductase complex subunit E from Escherichia coli (strain SE11).